Here is a 553-residue protein sequence, read N- to C-terminus: Serine/threonine-protein kinase WNG2 (553 aa).

Disordered stretches follow at residues 1–20 (MMFPAVAAPPRRLPGERLQR) and 88–107 (NREPPEDSAARPSSRSGGAE). The signal sequence occupies residues 1–64 (MMFPAVAAPP…GLSWVSVAVA (64 aa)). The region spanning 125–395 (FKQLRPVDEF…IGEVMEDPFF (271 aa)) is the Protein kinase domain. Position 186 (lysine 186) interacts with ATP. Aspartate 278 functions as the Proton acceptor in the catalytic mechanism. The tract at residues 432-553 (REKADAAAKA…GFNKEDAQES (122 aa)) is disordered. Low complexity predominate over residues 438–451 (AAKAADNAEVPAAK). Basic and acidic residues-rich tracts occupy residues 465-486 (GDRDRAGSGEKPAERAEEEKGR), 494-524 (EGNHDRTDDAGREELREGPGDQKPSGEENRE), and 531-553 (QREEQREGTGLEEGFNKEDAQES).

This sequence belongs to the protein kinase superfamily. STE Ser/Thr protein kinase family. WNG subfamily. The cofactor is Mg(2+).

It localises to the cytoplasmic granule. Its subcellular location is the secreted. The protein localises to the parasitophorous vacuole lumen. The enzyme catalyses L-seryl-[protein] + ATP = O-phospho-L-seryl-[protein] + ADP + H(+). It catalyses the reaction L-threonyl-[protein] + ATP = O-phospho-L-threonyl-[protein] + ADP + H(+). In terms of biological role, probable serine/threonine-protein kinase. The chain is Serine/threonine-protein kinase WNG2 from Toxoplasma gondii.